The chain runs to 121 residues: LOB domain-containing protein 23 (121 aa).

Positions 4-105 constitute an LOB domain; it reads KRCAACKYLR…NELAKTQAEI (102 aa).

This sequence belongs to the LOB domain-containing protein family.

The sequence is that of LOB domain-containing protein 23 (LBD23) from Arabidopsis thaliana (Mouse-ear cress).